We begin with the raw amino-acid sequence, 327 residues long: Protein hunchback (327 aa).

C2H2-type zinc fingers lie at residues 1-5 (HMRNH), 11-33 (FQCSQCSYSCVNKSMLNSHLKSH), and 39-63 (YRCADCNYATKYCHSLKLHLRKYQH). Disordered stretches follow at residues 91–121 (KQKPFSKMFEPQGPVSNNNQPQPPAPTHPIF), 143–170 (PPNNNYEQRTSPKNHEIQTEKPQQMSPP), and 182–290 (ERPL…EVAS). 2 stretches are compositionally biased toward basic and acidic residues: residues 205–216 (THREMPTEHGDD) and 265–276 (LQHEDEKMRDAD). C2H2-type zinc fingers lie at residues 297 to 319 (YTCQFCDITFGDLTMHTIHMGFH) and 325 to 327 (FMC).

Belongs to the hunchback C2H2-type zinc-finger protein family.

The protein localises to the nucleus. Functionally, gap class segmentation protein that controls development of head structures. The sequence is that of Protein hunchback (hb) from Manduca sexta (Tobacco hawkmoth).